A 194-amino-acid polypeptide reads, in one-letter code: Holliday junction branch migration complex subunit RuvA (194 aa).

A domain I region spans residues 1–62 (MIGYLKGNVI…EDSLDLYGFK (62 aa)). The domain II stretch occupies residues 63 to 136 (TMEERELFET…KGKLKDMSGD (74 aa)). The interval 136-140 (DFEEP) is flexible linker. The domain III stretch occupies residues 141 to 194 (LPDNRNTELSDALASLGYSELEIEEALSNADIKNNGSLEENIKKALGYLGSKGS).

It belongs to the RuvA family. In terms of assembly, homotetramer. Forms an RuvA(8)-RuvB(12)-Holliday junction (HJ) complex. HJ DNA is sandwiched between 2 RuvA tetramers; dsDNA enters through RuvA and exits via RuvB. An RuvB hexamer assembles on each DNA strand where it exits the tetramer. Each RuvB hexamer is contacted by two RuvA subunits (via domain III) on 2 adjacent RuvB subunits; this complex drives branch migration. In the full resolvosome a probable DNA-RuvA(4)-RuvB(12)-RuvC(2) complex forms which resolves the HJ.

It localises to the cytoplasm. The RuvA-RuvB-RuvC complex processes Holliday junction (HJ) DNA during genetic recombination and DNA repair, while the RuvA-RuvB complex plays an important role in the rescue of blocked DNA replication forks via replication fork reversal (RFR). RuvA specifically binds to HJ cruciform DNA, conferring on it an open structure. The RuvB hexamer acts as an ATP-dependent pump, pulling dsDNA into and through the RuvAB complex. HJ branch migration allows RuvC to scan DNA until it finds its consensus sequence, where it cleaves and resolves the cruciform DNA. This is Holliday junction branch migration complex subunit RuvA from Halothermothrix orenii (strain H 168 / OCM 544 / DSM 9562).